The sequence spans 664 residues: Bifunctional 3-dehydroquinate synthase/phosphatase (664 aa).

Positions 1–352 are 3-dehydroquinate synthase; the sequence is MKKIFDDIYV…KIIDKYKNNF (352 aa). NAD(+) is bound by residues 61 to 66, 95 to 99, 119 to 120, Lys132, Lys141, and 159 to 162; these read DGEEYK, GVICD, TS, and FLKT. Positions 174, 238, and 255 each coordinate Zn(2+). A GPPA/PPX region spans residues 353 to 664; that stretch reads LRASIDIGTN…GAILEGVENK (312 aa).

This sequence in the N-terminal section; belongs to the sugar phosphate cyclases superfamily. Dehydroquinate synthase family. The protein in the C-terminal section; belongs to the GppA/Ppx family. As to quaternary structure, monomer. NAD(+) serves as cofactor. Requires Co(2+) as cofactor. Zn(2+) is required as a cofactor.

It is found in the cytoplasm. It carries out the reaction 7-phospho-2-dehydro-3-deoxy-D-arabino-heptonate = 3-dehydroquinate + phosphate. The protein operates within metabolic intermediate biosynthesis; chorismate biosynthesis; chorismate from D-erythrose 4-phosphate and phosphoenolpyruvate: step 2/7. This is Bifunctional 3-dehydroquinate synthase/phosphatase (aroB) from Fusobacterium nucleatum subsp. nucleatum (strain ATCC 25586 / DSM 15643 / BCRC 10681 / CIP 101130 / JCM 8532 / KCTC 2640 / LMG 13131 / VPI 4355).